Reading from the N-terminus, the 346-residue chain is Phosphate acyltransferase (346 aa).

Belongs to the PlsX family. As to quaternary structure, homodimer. Probably interacts with PlsY.

Its subcellular location is the cytoplasm. It catalyses the reaction a fatty acyl-[ACP] + phosphate = an acyl phosphate + holo-[ACP]. It functions in the pathway lipid metabolism; phospholipid metabolism. Functionally, catalyzes the reversible formation of acyl-phosphate (acyl-PO(4)) from acyl-[acyl-carrier-protein] (acyl-ACP). This enzyme utilizes acyl-ACP as fatty acyl donor, but not acyl-CoA. The sequence is that of Phosphate acyltransferase from Geobacter sulfurreducens (strain ATCC 51573 / DSM 12127 / PCA).